A 267-amino-acid polypeptide reads, in one-letter code: Tryptophan synthase alpha chain (267 aa).

Active-site proton acceptor residues include Glu49 and Asp60.

The protein belongs to the TrpA family. As to quaternary structure, tetramer of two alpha and two beta chains.

It carries out the reaction (1S,2R)-1-C-(indol-3-yl)glycerol 3-phosphate + L-serine = D-glyceraldehyde 3-phosphate + L-tryptophan + H2O. The protein operates within amino-acid biosynthesis; L-tryptophan biosynthesis; L-tryptophan from chorismate: step 5/5. In terms of biological role, the alpha subunit is responsible for the aldol cleavage of indoleglycerol phosphate to indole and glyceraldehyde 3-phosphate. The sequence is that of Tryptophan synthase alpha chain from Salinispora tropica (strain ATCC BAA-916 / DSM 44818 / JCM 13857 / NBRC 105044 / CNB-440).